We begin with the raw amino-acid sequence, 412 residues long: Serine hydroxymethyltransferase (412 aa).

(6S)-5,6,7,8-tetrahydrofolate is bound by residues leucine 116 and 120–122 (GHL). Position 225 is an N6-(pyridoxal phosphate)lysine (lysine 225). (6S)-5,6,7,8-tetrahydrofolate is bound by residues glutamate 241 and 350–352 (SPF).

This sequence belongs to the SHMT family. In terms of assembly, homodimer. The cofactor is pyridoxal 5'-phosphate.

It is found in the cytoplasm. It carries out the reaction (6R)-5,10-methylene-5,6,7,8-tetrahydrofolate + glycine + H2O = (6S)-5,6,7,8-tetrahydrofolate + L-serine. The protein operates within one-carbon metabolism; tetrahydrofolate interconversion. It functions in the pathway amino-acid biosynthesis; glycine biosynthesis; glycine from L-serine: step 1/1. Its function is as follows. Catalyzes the reversible interconversion of serine and glycine with tetrahydrofolate (THF) serving as the one-carbon carrier. This reaction serves as the major source of one-carbon groups required for the biosynthesis of purines, thymidylate, methionine, and other important biomolecules. Also exhibits THF-independent aldolase activity toward beta-hydroxyamino acids, producing glycine and aldehydes, via a retro-aldol mechanism. This is Serine hydroxymethyltransferase from Enterococcus faecalis (strain ATCC 700802 / V583).